Here is a 28-residue protein sequence, read N- to C-terminus: Cysteine-rich venom protein asurin-2 (28 aa).

Residues 1–15 (SNKKDYRKEIVDKHN) show a composition bias toward basic and acidic residues. The tract at residues 1 to 28 (SNKKDYRKEIVDKHNALSRSVKPTASNM) is disordered. The span at 17–28 (LSRSVKPTASNM) shows a compositional bias: polar residues.

Belongs to the CRISP family. Post-translationally, contains 8 disulfide bonds. In terms of tissue distribution, expressed by the venom gland.

It localises to the secreted. In terms of biological role, blocks contraction of smooth muscle elicited by high potassium-induced depolarization, but does not block caffeine-stimulated contraction. May target voltage-gated calcium channels on smooth muscle. The polypeptide is Cysteine-rich venom protein asurin-2 (Austrelaps superbus (Lowland copperhead snake)).